The following is a 255-amino-acid chain: MAVEIEQFMCRSDNFGVLVHDPKSGQTAIIDAPEEAPILAAIKRTGWTPTMILTTHHHMDHVEANLALKERFKLRIVGPEAEKAKIPGIDETVEEGSVLHLGDERIEVIATPGHTAGHVSYHLPASKVAFTADTLFALGCGRLFECKPPVMYESLRKLAALPAATTIYCGHEYTLANARFALTVDPTNSALKERATRIEALRVDNKPTLPTTIGEELSTNPFLRWHDPAIRKHLGMEKAGDAEVFAEIRKRKDNF.

Zn(2+) is bound by residues H56, H58, D60, H61, H114, D133, and H171.

This sequence belongs to the metallo-beta-lactamase superfamily. Glyoxalase II family. In terms of assembly, monomer. It depends on Zn(2+) as a cofactor.

It catalyses the reaction an S-(2-hydroxyacyl)glutathione + H2O = a 2-hydroxy carboxylate + glutathione + H(+). It participates in secondary metabolite metabolism; methylglyoxal degradation; (R)-lactate from methylglyoxal: step 2/2. Its function is as follows. Thiolesterase that catalyzes the hydrolysis of S-D-lactoyl-glutathione to form glutathione and D-lactic acid. This chain is Hydroxyacylglutathione hydrolase, found in Mesorhizobium japonicum (strain LMG 29417 / CECT 9101 / MAFF 303099) (Mesorhizobium loti (strain MAFF 303099)).